Reading from the N-terminus, the 716-residue chain is Dynein axonemal intermediate chain 7 (716 aa).

It belongs to the DNAI7 family. As to quaternary structure, part of the multisubunit axonemal dynein complex formed at least of two heavy chains and a number of intermediate and light chains. Interacts with tubulin. Associates with microtubule. Ubiquitinated. Ubiquitination leads to its degradation through the 26S proteasome. Ubiquitin-proteasome-mediated DNAI7 degradation occurs in mitosis.

It is found in the cell projection. Its subcellular location is the cilium. The protein localises to the cytoplasm. Its function is as follows. Via its association with the multisubunit axonemal dynein complex, is potentially involved in the regulation of cilia function. May also act as a cell cycle regulator. The chain is Dynein axonemal intermediate chain 7 from Homo sapiens (Human).